The sequence spans 135 residues: Translation initiation factor 2 subunit beta (135 aa).

Belongs to the eIF-2-beta/eIF-5 family. Heterotrimer composed of an alpha, a beta and a gamma chain.

In terms of biological role, eIF-2 functions in the early steps of protein synthesis by forming a ternary complex with GTP and initiator tRNA. The polypeptide is Translation initiation factor 2 subunit beta (eif2b) (Methanothermobacter thermautotrophicus (strain ATCC 29096 / DSM 1053 / JCM 10044 / NBRC 100330 / Delta H) (Methanobacterium thermoautotrophicum)).